We begin with the raw amino-acid sequence, 483 residues long: Isocitrate dehydrogenase [NADP] (483 aa).

Residue T74 participates in NADP(+) binding. 5 residues coordinate D-threo-isocitrate: S83, N85, R89, R99, and R121. Residue D232 participates in Mg(2+) binding. NADP(+) is bound by residues 264–270 (HGSAPDI) and N277.

Belongs to the isocitrate and isopropylmalate dehydrogenases family. Homodimer. Mg(2+) serves as cofactor. The cofactor is Mn(2+).

It catalyses the reaction D-threo-isocitrate + NADP(+) = 2-oxoglutarate + CO2 + NADPH. Catalyzes the oxidative decarboxylation of isocitrate to 2-oxoglutarate and carbon dioxide with the concomitant reduction of NADP(+). The sequence is that of Isocitrate dehydrogenase [NADP] (icd) from Rickettsia typhi (strain ATCC VR-144 / Wilmington).